Consider the following 410-residue polypeptide: MKSNIQLHYCYFLLSEAKKKASYIGYSVNPCRRLRQHNGEIKKGAKKTKSGVPWNLGICVGGFPDRVAALRFEWAWQHPNICKVTRDNIESWKIVKTKKTSENKRILNKRQWSIQQRVSILLCMTTLEPWKNMNLTVFVFKDELENTIKEVIEGIKKIKISPNFTSPNILNKDYLLMFLYFGEDSFYEKGIKFLRCDYETFKEFQKPSFDCDSDSNIEDNSNVFNPEEIISHEDSFSIKCFLCQKDIGIGRNYLEFPCCTEIKVHLSCIQLWGESNNHLETVIDELFPLKEFVAPLIPLNISCPCCFKDFEWEEAKKNYIKTKNVPTESLELGEDFPVLSNGEKENYSQEENSQNKVIEDGFLEMDIDNHRNRLSYAHETKQKRDILFSDDEFSEISQKCEFIDLTVDSD.

The 84-residue stretch at 6-89 (QLHYCYFLLS…NICKVTRDNI (84 aa)) folds into the GIY-YIG domain.

The protein belongs to the SLX1 family. As to quaternary structure, forms a heterodimer with a member of the SLX4 family. A divalent metal cation serves as cofactor.

It localises to the nucleus. Functionally, catalytic subunit of a heterodimeric structure-specific endonuclease that resolves DNA secondary structures generated during DNA repair and recombination. Has endonuclease activity towards branched DNA substrates, introducing single-strand cuts in duplex DNA close to junctions with ss-DNA. This Cryptosporidium parvum (strain Iowa II) protein is Structure-specific endonuclease subunit SLX1 homolog.